The following is a 141-amino-acid chain: ATP synthase epsilon chain (141 aa).

The protein belongs to the ATPase epsilon chain family. F-type ATPases have 2 components, CF(1) - the catalytic core - and CF(0) - the membrane proton channel. CF(1) has five subunits: alpha(3), beta(3), gamma(1), delta(1), epsilon(1). CF(0) has three main subunits: a, b and c.

Its subcellular location is the cell inner membrane. In terms of biological role, produces ATP from ADP in the presence of a proton gradient across the membrane. The sequence is that of ATP synthase epsilon chain from Burkholderia multivorans (strain ATCC 17616 / 249).